A 399-amino-acid chain; its full sequence is Bombesin receptor subtype-3 (399 aa).

Residues 1–41 lie on the Extracellular side of the membrane; sequence MSQRQSQSPNQTLISITNDTETSSSVVSNDTTHKGWTGDNS. N-linked (GlcNAc...) asparagine glycans are attached at residues asparagine 10, asparagine 18, and asparagine 29. Residues 42-63 traverse the membrane as a helical segment; sequence PGIEALCAIYITYAGIISVGIL. Residues 64–82 are Cytoplasmic-facing; that stretch reads GNAILIKVFFKTKSMQTVP. The chain crosses the membrane as a helical span at residues 83–103; it reads NIFITSLAFGDLLLLLTCVPV. Over 104-121 the chain is Extracellular; that stretch reads DATHYLAEGWLFGKVGCK. The cysteines at positions 120 and 203 are disulfide-linked. The chain crosses the membrane as a helical span at residues 122–143; sequence VLSFIRLTSVGVSVFTLTILSA. At 144 to 163 the chain is on the cytoplasmic side; sequence DRYKAVVKPLERQPPNAILK. A helical membrane pass occupies residues 164-184; that stretch reads TCAKAGGIWIVSMIFALPEAI. The Extracellular portion of the chain corresponds to 185–220; the sequence is FSNVYTFQDPNRNVTFESCNSYPISERLLQEIHSLL. Residues 221–241 form a helical membrane-spanning segment; it reads CFLVFYIIPLSIISVYYSLIA. Residues 242-272 lie on the Cytoplasmic side of the membrane; the sequence is RTLYKSTLNIPTEEQSHARKQIESRKRIAKT. A helical membrane pass occupies residues 273–293; that stretch reads VLVLVALFALCWLPNHLLYLY. At 294–313 the chain is on the extracellular side; it reads HSFTYESYANHSDVPFVIII. Residues 314–333 form a helical membrane-spanning segment; it reads FSRVLAFSNSCVNPFALYWL. Over 334–399 the chain is Cytoplasmic; sequence SKTFQQHFKA…SSAKKGEDKV (66 aa). Cysteine 347 carries the S-palmitoyl cysteine lipid modification.

Belongs to the G-protein coupled receptor 1 family. Interacts with C6orf89.

It localises to the cell membrane. Its function is as follows. Role in sperm cell division, maturation, or function. This receptor mediates its action by association with G proteins that activate a phosphatidylinositol-calcium second messenger system. In Mus musculus (Mouse), this protein is Bombesin receptor subtype-3 (Brs3).